The following is a 144-amino-acid chain: Interferon-induced transmembrane protein 2 (144 aa).

Met1 carries the N-acetylmethionine modification. At 1–56 (MSHNSQAFLSTNAGLPPSYETIKEEYGVTELGEPSNSAVVRTTVINMPREVSVPDH) the chain is on the cytoplasmic side. Position 19 is a phosphotyrosine (Tyr19). An intramembrane region (helical) is located at residues 57 to 77 (VVWSLFNTLFFNACCLGFVAY). Residues Cys70, Cys71, and Cys104 are each lipidated (S-palmitoyl cysteine). Residues 78 to 110 (AYSVKSRDRKMVGDVVGAQAYASTAKCLNISSL) lie on the Cytoplasmic side of the membrane. A helical membrane pass occupies residues 111-131 (IFSILMVIICIIIFSTTSVVV). Topologically, residues 132–144 (FQSFAQRTPHSGF) are extracellular.

Belongs to the CD225/Dispanin family. In terms of assembly, interacts with CD81. In terms of processing, palmitoylation on membrane-proximal cysteines controls clustering in membrane compartments and antiviral activity. Post-translationally, phosphorylation at Tyr-19 is required for endosomal and lysosomal location. Predominantly expressed in nascent primordial germ cells, as well as in gonadal germ cells.

Its subcellular location is the cell membrane. It is found in the lysosome membrane. The protein resides in the late endosome membrane. Functionally, IFN-induced antiviral protein which inhibits the entry of viruses to the host cell cytoplasm, permitting endocytosis, but preventing subsequent viral fusion and release of viral contents into the cytosol. Active against multiple viruses, including influenza A virus, SARS coronavirus (SARS-CoV), Marburg virus (MARV) and Ebola virus (EBOV), Dengue virus (DNV) and West Nile virus (WNV). Can inhibit: influenza virus hemagglutinin protein-mediated viral entry, MARV and EBOV GP1,2-mediated viral entry and SARS-CoV S protein-mediated viral entry. Induces cell cycle arrest and mediates apoptosis by caspase activation and in p53-independent manner. The chain is Interferon-induced transmembrane protein 2 (Ifitm2) from Mus musculus (Mouse).